The sequence spans 868 residues: Spindle and centriole-associated protein 1 (868 aa).

Disordered stretches follow at residues 129–154, 172–201, 229–250, and 291–326; these read RTGF…DPGT, DDGG…HSNR, IAAQ…AEDQ, and KPLL…LASS. Polar residues-rich tracts occupy residues 190-200 and 229-245; these read ELPNSLSPHSN and IAAQ…SSEL. Threonine 236 carries the post-translational modification Phosphothreonine. Residue serine 240 is modified to Phosphoserine. Positions 315–326 are enriched in low complexity; sequence SSSTTSADLASS. The stretch at 381–434 forms a coiled coil; that stretch reads RYLKESETQLRKEVETRQQLEQMLGDHRELIDALTAEILLLREENGAVQARLQQ. Disordered regions lie at residues 630–664 and 702–722; these read PQFV…LGDG and SSGG…NASE. Residues 634 to 649 show a composition bias toward low complexity; it reads SLSQPPCSSPPSTQQS. Phosphoserine is present on serine 655. Basic and acidic residues predominate over residues 706-715; sequence EHGDGLREPS. The stretch at 736 to 764 forms a coiled coil; the sequence is SSMEERIAELNRQSMEARSKLLQLIEQQK. Phosphoserine is present on residues serine 772, serine 773, serine 776, and serine 831. The interval 805–868 is disordered; sequence SSKCNTVSPV…GWFALSAHLP (64 aa). Low complexity predominate over residues 812-831; it reads SPVSGVSSRRSSGAISNSCS.

Interacts with CEP120.

It is found in the cytoplasm. The protein resides in the cytoskeleton. Its subcellular location is the microtubule organizing center. The protein localises to the centrosome. It localises to the centriole. It is found in the spindle. Functionally, regulator required for centriole duplication, for proper bipolar spindle formation and chromosome congression in mitosis. The polypeptide is Spindle and centriole-associated protein 1 (Spice1) (Rattus norvegicus (Rat)).